A 292-amino-acid chain; its full sequence is Inhibitory synaptic factor 1 (292 aa).

The segment at Met1–Ile25 is disordered. Residues Lys30–Asp63 are a coiled coil. A disordered region spans residues Thr120–Asn292. The span at Gly180 to Leu192 shows a compositional bias: basic and acidic residues. Over residues Cys198–Leu216 the composition is skewed to acidic residues. Positions Arg263–Lys285 are enriched in polar residues.

It belongs to the INSYN1 family. Interacts with GPHN.

The protein localises to the postsynaptic density. Functionally, component of the protein machinery at the inhibitory synapses, probably acting as a scaffold. Inhibitory synapses dampen neuronal activity through postsynaptic hyperpolarization. This synaptic inhibition is fundamental for the functioning of the central nervous system, shaping and orchestrating the flow of information through neuronal networks to generate a precise neural code. The polypeptide is Inhibitory synaptic factor 1 (Insyn1) (Mus musculus (Mouse)).